Reading from the N-terminus, the 438-residue chain is Iroquois-class homeodomain protein IRX-6 (438 aa).

A DNA-binding region (homeobox) is located at residues S143 to N205. 2 disordered regions span residues N205–V270 and P388–G438. Basic and acidic residues predominate over residues K214–S223. The segment covering L252–A268 has biased composition (acidic residues).

Belongs to the TALE/IRO homeobox family. As to expression, expressed in a subset of retinal ganglion cells and bipolar cells; including in type 2 and type 3a bipolar cells.

It localises to the nucleus. Its function is as follows. Transcription factor. Binds to the iroquois binding site (IBS) motif of target genes to regulate gene expression; functions as a transcriptional activator or repressor. Modulates expression of RCVRN, VSX1, BHLHE22/BHLHB5 and TACR3/Nk3r. Required downstream of retinal bipolar cell specification for the terminal differentiation of type 2, type 3a and possibly type 6 bipolar cells. This chain is Iroquois-class homeodomain protein IRX-6 (Irx6), found in Mus musculus (Mouse).